The following is an 88-amino-acid chain: Small ribosomal subunit protein bS20 (88 aa).

Belongs to the bacterial ribosomal protein bS20 family.

Its function is as follows. Binds directly to 16S ribosomal RNA. The protein is Small ribosomal subunit protein bS20 of Chelativorans sp. (strain BNC1).